A 143-amino-acid chain; its full sequence is Mediator of RNA polymerase II transcription subunit 9 (143 aa).

A coiled-coil region spans residues 84–141; sequence QDCNHKIFELQKRFESAREQIRQLPGIDYNKDEQLQRLELLRNQFKLKQQLIRKYKDT.

It belongs to the Mediator complex subunit 9 family. In terms of assembly, component of the Mediator complex.

Its subcellular location is the nucleus. Functionally, component of the Mediator complex, a coactivator involved in the regulated transcription of nearly all RNA polymerase II-dependent genes. Mediator functions as a bridge to convey information from gene-specific regulatory proteins to the basal RNA polymerase II transcription machinery. Mediator is recruited to promoters by direct interactions with regulatory proteins and serves as a scaffold for the assembly of a functional preinitiation complex with RNA polymerase II and the general transcription factors. This Drosophila pseudoobscura pseudoobscura (Fruit fly) protein is Mediator of RNA polymerase II transcription subunit 9 (MED9).